Here is an 815-residue protein sequence, read N- to C-terminus: Cilia- and flagella-associated protein 251 (815 aa).

WD repeat units lie at residues 58–99 (GHTS…PTRT), 103–148 (PHRH…TPPE), 166–205 (PAGD…PRFQ), 218–257 (QSVG…AQVG), 271–308 (IHNC…VAWF), 379–418 (SLLA…LLGG), 420–460 (AFER…DLYV), 463–502 (NTAA…HTMR), 511–553 (SHHG…VAAG), and 573–612 (SFAP…LERS).

In terms of assembly, identified in a spoke-associated complex containing CFAP61, CFAP91 and CFAP251; the complex is associated with the radial spokes in the axoneme. The complex associates with Calmodulin; the association is calcium sensitive.

The protein localises to the cytoplasm. The protein resides in the cytoskeleton. It is found in the flagellum axoneme. In terms of biological role, as component of a spoke-associated complex, regulates flagellar dynein activity by mediating regulatory signals between the radial spokes and dynein arms. This Chlamydomonas reinhardtii (Chlamydomonas smithii) protein is Cilia- and flagella-associated protein 251.